A 157-amino-acid chain; its full sequence is 6,7-dimethyl-8-ribityllumazine synthase (157 aa).

5-amino-6-(D-ribitylamino)uracil is bound by residues F22, 56-58 (AFE), and 81-83 (VLI). (2S)-2-hydroxy-3-oxobutyl phosphate is bound at residue 86 to 87 (ET). The active-site Proton donor is H89. Residue F114 participates in 5-amino-6-(D-ribitylamino)uracil binding. Residue R128 participates in (2S)-2-hydroxy-3-oxobutyl phosphate binding.

Belongs to the DMRL synthase family.

The catalysed reaction is (2S)-2-hydroxy-3-oxobutyl phosphate + 5-amino-6-(D-ribitylamino)uracil = 6,7-dimethyl-8-(1-D-ribityl)lumazine + phosphate + 2 H2O + H(+). It participates in cofactor biosynthesis; riboflavin biosynthesis; riboflavin from 2-hydroxy-3-oxobutyl phosphate and 5-amino-6-(D-ribitylamino)uracil: step 1/2. In terms of biological role, catalyzes the formation of 6,7-dimethyl-8-ribityllumazine by condensation of 5-amino-6-(D-ribitylamino)uracil with 3,4-dihydroxy-2-butanone 4-phosphate. This is the penultimate step in the biosynthesis of riboflavin. This Chlamydia muridarum (strain MoPn / Nigg) protein is 6,7-dimethyl-8-ribityllumazine synthase.